A 244-amino-acid chain; its full sequence is uncharacterized protein (244 aa).

The first 17 residues, 1 to 17 (MVLHVITALLSIGLCYG), serve as a signal peptide directing secretion.

Component of the acid-soluble and acid-insoluble organic matrix of prismatic shell layers (at protein level).

It localises to the secreted. This is an uncharacterized protein from Haliotis asinina (Donkey's ear abalone).